We begin with the raw amino-acid sequence, 160 residues long: Putative flagellin YvzB (160 aa).

This sequence belongs to the bacterial flagellin family. In terms of assembly, interacts with FliW.

The protein resides in the bacterial flagellum. In Bacillus subtilis (strain 168), this protein is Putative flagellin YvzB (yvzB).